The chain runs to 210 residues: MGQGQSVILSFEDGARTVELARESVEAFVQNGQREQPGSMRDAFYNRTSAFVRLESTRGRGRLRGCAGAHGSIHELGNHDQQLGHAIVEAAIEAASEASCGSEVEDAELPNIRVSVCTVSNLVLTDDPIEDIELGVHGVAIDGDGQHGWMYPTLPVENDWSVFEYLDRTCRKANLPDGAWQDEDVMVTLFEGQVFRETGDEDDPVEELTA.

The AMMECR1 domain maps to 12 to 206; the sequence is EDGARTVELA…ETGDEDDPVE (195 aa).

This chain is Protein VNG_2543C, found in Halobacterium salinarum (strain ATCC 700922 / JCM 11081 / NRC-1) (Halobacterium halobium).